Reading from the N-terminus, the 5412-residue chain is Mucin-4 (5412 aa).

Residues 1–28 form the signal peptide; the sequence is MKGARWRRVPWVSLSCLCLCLLPHVVPG. 2 disordered regions span residues 40–87 and 142–249; these read TAAP…TTSK and TSTD…ATSS. The variable number of tandem repeats (VNTR) stretch occupies residues 43 to 4241; sequence PVTSTGSTTA…SVSTGHATPL (4199 aa). The span at 142–163 shows a compositional bias: low complexity; sequence TSTDSTLGNTEETSTAGTESST. O-linked (GalNAc...) threonine glycosylation is found at Thr-154 and Thr-156. Residues 164 to 199 are compositionally biased toward polar residues; sequence PVTSAVSITAGQEGQSRTTSWRTSIQDTSASSQNHW. A compositionally biased stretch (low complexity) spans 200 to 223; sequence TRSTQTTRESQTSTLTHRTTSTPS. Polar residues predominate over residues 224 to 249; that stretch reads FSPSVHNVTGTVSQKTSPSGETATSS. Asn-230 is a glycosylation site (N-linked (GlcNAc...) asparagine). Thr-234 carries O-linked (GalNAc...) threonine glycosylation. N-linked (GlcNAc...) asparagine glycosylation is present at Asn-255. Polar residues-rich tracts occupy residues 267 to 285, 306 to 328, and 358 to 367; these read TTST…SVPV, SPAT…HQTQ, and GFNPSGTVSQ. Disordered stretches follow at residues 267–286, 303–328, 353–383, 438–473, 488–580, 592–853, 868–963, 983–1864, 1878–2078, 2111–2220, 2232–2814, 2837–3306, 3320–3580, 3592–3644, 3656–3756, and 3769–4223; these read TTST…VPVT, EGQS…HQTQ, LSSP…PSSV, LSPS…SFSP, WPSS…ALLS, TATS…ASAS, VPGT…SGSG, SSAS…DASS, ASSV…TGHA, TALH…ASTG, SAST…TGHA, IPSS…SSVS, SAST…VSTG, SVST…VSTG, SVST…ASTG, and VSTG…GHAT. Thr-364, Thr-369, and Thr-376 each carry an O-linked (GalNAc...) threonine glycan. Residues 368-383 show a composition bias toward low complexity; that stretch reads ETFPSGETTTSSPSSV. Composition is skewed to polar residues over residues 450–459, 488–526, and 546–557; these read AFHTQQSEGA, WPSS…TGTA, and TTYSSHSTTLPK. Low complexity-rich tracts occupy residues 558–577 and 615–627; these read TTGA…TGEA and STNH…TSTS. Asn-617 carries N-linked (GlcNAc...) asparagine glycosylation. 3 O-linked (GalNAc...) threonine glycosylation sites follow: Thr-620, Thr-666, and Thr-688. Over residues 628 to 677 the composition is skewed to polar residues; sequence PQESPAVSQRGHTQAPQTTQESQTTRSVSPMTDTKTVTTPGSSFTASGHS. A compositionally biased stretch (low complexity) spans 705–717; the sequence is TTQAPTTALQAAP. Residues 729-746 show a composition bias toward polar residues; sequence GTSLSKTGALTLANSVVS. Residue Thr-747 is glycosylated (O-linked (GalNAc...) threonine). Residues 756–771 are compositionally biased toward low complexity; sequence TSASASTSPDTAAAMT. Polar residues predominate over residues 772-789; the sequence is HTHQAESTEASGQTQTSE. Positions 790–828 are enriched in low complexity; it reads PASSGSRTTSAGTATPSSSGASGTTPSGSEGISTSGETT. Thr-797, Thr-798, Thr-802, Thr-804, Thr-813, and Thr-814 each carry an O-linked (GalNAc...) threonine glycan. Positions 829–852 are enriched in polar residues; sequence RFSSNPSRDSHTTQSTTELLSASA. O-linked (GalNAc...) threonine glycosylation is found at Thr-881, Thr-886, and Thr-892. Positions 885 to 903 are enriched in low complexity; sequence PTGQSSPTSPSASPQETAA. Over residues 907–928 the composition is skewed to polar residues; sequence MAQTQRTRTSRGSDTISLASQA. Low complexity predominate over residues 929-950; the sequence is TDTFSTVPPTPPSITSTGLTSP. Residues Thr-931, Thr-934, Thr-938, Thr-943, Thr-945, Thr-948, Thr-952, Thr-954, Thr-1003, Thr-1007, Thr-1012, Thr-1019, Thr-1022, Thr-1023, Thr-1028, Thr-1030, Thr-1035, Thr-1039, Thr-1044, Thr-1051, Thr-1055, Thr-1060, Thr-1062, Thr-1067, Thr-1071, Thr-1076, Thr-1083, Thr-1086, Thr-1087, Thr-1092, Thr-1094, Thr-1099, Thr-1103, Thr-1108, Thr-1110, Thr-1115, Thr-1118, Thr-1119, Thr-1124, Thr-1126, Thr-1131, Thr-1135, Thr-1172, Thr-1179, Thr-1182, Thr-1183, Thr-1188, Thr-1195, Thr-1199, Thr-1204, Thr-1236, Thr-1243, Thr-1246, and Thr-1247 are each glycosylated (O-linked (GalNAc...) threonine). Residues 951 to 963 show a composition bias toward polar residues; it reads QTETHTLSPSGSG. Low complexity predominate over residues 1007-1024; that stretch reads TPLPVTSPSSVSTGHTTP. Over residues 1028–1054 the composition is skewed to polar residues; it reads TDTSSESTGHVTPLPVTSFSSASTGDS. Residues 1060–1086 show a composition bias toward polar residues; that stretch reads TDTSSASTGHVTPLPVTSLSSASTGDT. Polar residues predominate over residues 1092–1118; that stretch reads TDTSSASTGHATSLPVTDTSSVSTGHT. Polar residues-rich tracts occupy residues 1124-1150 and 1157-1197; these read TDTS…TGHT and DASS…STGH. 2 stretches are compositionally biased toward polar residues: residues 1204–1213 and 1221–1246; these read TDTSSASTGH and DASS…TGHT. Residues 1252 to 1262 show a composition bias toward polar residues; that stretch reads TDTSSASTGQA. Residues 1263–1279 are compositionally biased toward low complexity; that stretch reads TSLLVTDTSSVSTGDTT. O-linked (GalNAc...) threonine glycosylation is found at Thr-1278, Thr-1279, Thr-1284, Thr-1286, Thr-1291, Thr-1295, Thr-1300, Thr-1307, Thr-1311, Thr-1316, Thr-1323, Thr-1326, Thr-1332, Thr-1339, Thr-1342, Thr-1343, and Thr-1348. Over residues 1281–1325 the composition is skewed to polar residues; it reads LPVTSTSSASTGHVTPLHVTSPSSASTGHATPLPVTSLSSASTGD. The span at 1332–1342 shows a compositional bias: polar residues; the sequence is TSPSSASTGDT. 2 stretches are compositionally biased toward polar residues: residues 1349-1358 and 1365-1405; these read DASSVSTGHT and DASS…STGH. Thr-1380, Thr-1387, Thr-1390, Thr-1391, Thr-1396, Thr-1403, Thr-1407, Thr-1412, Thr-1444, Thr-1451, Thr-1454, and Thr-1455 each carry an O-linked (GalNAc...) threonine glycan. 2 stretches are compositionally biased toward polar residues: residues 1412-1421 and 1429-1454; these read TDTSSASTGH and DASS…TGHT. Over residues 1460 to 1470 the composition is skewed to polar residues; sequence TDTSSASTGQA. A compositionally biased stretch (low complexity) spans 1471 to 1487; it reads TSLLVTDTSSVSTGDTT. O-linked (GalNAc...) threonine glycans are attached at residues Thr-1486, Thr-1487, Thr-1492, Thr-1494, Thr-1499, Thr-1503, Thr-1508, Thr-1515, Thr-1519, Thr-1524, Thr-1531, Thr-1534, Thr-1540, Thr-1547, Thr-1550, Thr-1551, Thr-1556, Thr-1563, Thr-1566, Thr-1567, Thr-1572, Thr-1579, Thr-1582, Thr-1583, Thr-1588, Thr-1590, Thr-1598, Thr-1599, Thr-1604, Thr-1611, Thr-1614, Thr-1615, Thr-1620, Thr-1622, Thr-1627, and Thr-1630. Residues 1489–1533 are compositionally biased toward polar residues; sequence LPVTSTSSASTGHVTPLHVTSPSSASTGHATPLPVTSLSSASTGD. Positions 1540 to 1550 are enriched in polar residues; it reads TSPSSASTGDT. Residues 1557 to 1582 are compositionally biased toward polar residues; that stretch reads DASSVSTGHTTPLPVTSPSSASTGHT. A compositionally biased stretch (polar residues) spans 1588-1614; that stretch reads TDTSSASKGDTTPLPVTSPSSASTGHT. The segment covering 1620-1631 has biased composition (low complexity); that stretch reads TDTSSASTGDTT. Polar residues predominate over residues 1633–1661; that stretch reads LPVTNASSLSTGHATPLHVTSPSSASTGH. N-linked (GlcNAc...) asparagine glycosylation is present at Asn-1637. O-linked (GalNAc...) threonine glycosylation is found at Thr-1659, Thr-1663, Thr-1668, Thr-1670, Thr-1675, Thr-1679, Thr-1716, Thr-1723, Thr-1726, Thr-1727, Thr-1732, Thr-1764, Thr-1766, Thr-1812, Thr-1819, Thr-1822, Thr-1823, Thr-1828, Thr-1835, Thr-1838, Thr-1839, Thr-1844, Thr-1854, and Thr-1855. A compositionally biased stretch (low complexity) spans 1668–1679; the sequence is TSTSSASTGHAT. Composition is skewed to polar residues over residues 1701–1741, 1749–1773, and 1812–1822; these read DVSS…STGH, DASS…STAH, and TSPSSASTGDT. Residues 1828 to 1840 are compositionally biased toward low complexity; the sequence is TDASSASTGDTTS. 3 stretches are compositionally biased toward polar residues: residues 1841-1864, 1892-1902, and 1909-1950; these read LPVT…DASS, TDTNSASTGDT, and DASS…SGHT. O-linked (GalNAc...) threonine glycosylation is found at Thr-1931, Thr-1934, Thr-1935, Thr-1940, Thr-1950, Thr-1951, Thr-1956, Thr-1963, Thr-1995, Thr-1999, Thr-2004, Thr-2006, Thr-2015, Thr-2020, Thr-2027, Thr-2030, Thr-2031, Thr-2036, Thr-2038, Thr-2047, Thr-2052, Thr-2062, Thr-2063, Thr-2132, Thr-2137, Thr-2139, Thr-2142, Thr-2143, Thr-2148, Thr-2150, Thr-2155, Thr-2159, Thr-2164, Thr-2180, Thr-2182, Thr-2187, Thr-2191, Thr-2196, Thr-2198, Thr-2203, Thr-2207, Thr-2244, Thr-2254, and Thr-2255. The segment covering 1957-1981 has biased composition (polar residues); it reads DASSVPTGHATSLPVTDASSVSTGH. Positions 2004-2030 are enriched in polar residues; sequence TDTSSVSTGQATPLPVTSLSSASTGDT. Residues 2036–2077 are compositionally biased toward polar residues; sequence TDTSSASTGQDTPLPVTSLSSVSTGDTTPLPVTNPSSASTGH. A compositionally biased stretch (low complexity) spans 2125–2146; the sequence is DTTPLPVTSPSSTSTGDTTPLP. Residues 2148-2189 show a composition bias toward polar residues; sequence TETSSVSTGHATSLPVTDTSSASTGHATSLPVTDTSSASTGH. Composition is skewed to polar residues over residues 2196 to 2219 and 2232 to 2254; these read TDTS…SAST and SAST…TGDT. Positions 2261-2270 are enriched in polar residues; it reads DASSVSTGHA. Over residues 2271-2283 the composition is skewed to low complexity; it reads TSLPVTSLSSVST. Residues Thr-2283, Thr-2286, Thr-2287, Thr-2292, Thr-2299, Thr-2303, Thr-2308, Thr-2324, Thr-2331, Thr-2334, Thr-2335, Thr-2340, Thr-2347, Thr-2351, Thr-2356, Thr-2363, Thr-2366, Thr-2367, Thr-2372, Thr-2382, Thr-2383, Thr-2388, Thr-2395, Thr-2398, Thr-2399, and Thr-2406 are each glycosylated (O-linked (GalNAc...) threonine). Residues 2284–2301 are compositionally biased toward polar residues; sequence GDTTPLPVTSPSSASTGH. Over residues 2309–2349 the composition is skewed to polar residues; sequence DASSASTGHATPLPVTSLSSASTGDTTPLPVTSPSSASTGH. Positions 2366–2399 are enriched in low complexity; it reads TTPLPVTSSSSASSGHTTPLPVTDASSASTGDTT. Polar residues-rich tracts occupy residues 2404–2413 and 2421–2445; these read TDTSSASTGH and GLSS…STGH. An N-linked (GlcNAc...) asparagine glycan is attached at Asn-2437. 14 O-linked (GalNAc...) threonine glycosylation sites follow: Thr-2452, Thr-2454, Thr-2459, Thr-2462, Thr-2463, Thr-2468, Thr-2500, Thr-2507, Thr-2510, Thr-2511, Thr-2516, Thr-2518, Thr-2523, and Thr-2526. Residues 2452 to 2471 show a composition bias toward low complexity; it reads TSTSSASTGDTTPLPGTDTS. Residues 2485-2510 show a composition bias toward polar residues; that stretch reads DASSVSTGDTTRLPVTSPSSASTGHT. A compositionally biased stretch (polar residues) spans 2517–2573; sequence DTPSASTGDTTPLPVTNASSLSTRHATSLHVTSPSSASTGHATSLPVTDTSAASTGH. Asn-2533 is a glycosylation site (N-linked (GlcNAc...) asparagine). Thr-2564, Thr-2566, Thr-2571, Thr-2575, Thr-2580, Thr-2582, Thr-2587, Thr-2590, Thr-2591, Thr-2596, Thr-2598, Thr-2619, Thr-2622, Thr-2623, Thr-2628, Thr-2660, Thr-2667, Thr-2670, Thr-2671, Thr-2676, Thr-2683, Thr-2687, Thr-2692, and Thr-2694 each carry an O-linked (GalNAc...) threonine glycan. Low complexity predominate over residues 2580 to 2591; the sequence is TSTSSASTGDTT. Composition is skewed to polar residues over residues 2597–2637 and 2645–2691; these read DTYS…STGH and DASS…SLPV. Over residues 2692–2704 the composition is skewed to low complexity; the sequence is TDTSSASTGDTTS. Polar residues predominate over residues 2705–2723; it reads LPVTDTSSAYTGDTTSLPV. The segment covering 2724 to 2735 has biased composition (low complexity); it reads TDTSSSSTGDTT. Residues Thr-2740, Thr-2742, Thr-2750, Thr-2751, Thr-2756, Thr-2758, Thr-2763, and Thr-2767 are each glycosylated (O-linked (GalNAc...) threonine). The span at 2740–2750 shows a compositional bias: polar residues; it reads TETSSVSTGDT. Polar residues predominate over residues 2756 to 2798; sequence TDTSSASTGHATPLPVTNTSSVSTGHATPLHVTSPSSASTGHT. A glycan (N-linked (GlcNAc...) asparagine) is linked at Asn-2773. Residues Thr-2779, Thr-2783, Thr-2788, Thr-2795, Thr-2798, Thr-2799, and Thr-2804 are each glycosylated (O-linked (GalNAc...) threonine). 2 stretches are compositionally biased toward polar residues: residues 2805–2814 and 2837–2846; these read DASSVSTGHA and IPSSASSGHT. Residues Thr-2846, Thr-2847, and Thr-2852 are each glycosylated (O-linked (GalNAc...) threonine). Positions 2853-2877 are enriched in polar residues; that stretch reads DASSVSTGHATSLPVTDASSVSTGH. A compositionally biased stretch (low complexity) spans 2895-2907; the sequence is TPLPLTSLSSVST. 17 O-linked (GalNAc...) threonine glycosylation sites follow: Thr-2910, Thr-2911, Thr-2916, Thr-2918, Thr-2923, Thr-2927, Thr-2932, Thr-2939, Thr-2942, Thr-2943, Thr-2948, Thr-2950, Thr-2955, Thr-2959, Thr-2966, Thr-2971, and Thr-2975. Residues 2916–2942 are compositionally biased toward polar residues; it reads TDTSSASTGQATPLPVTSLSSVSTGDT. Residues 2948–2973 are compositionally biased toward polar residues; the sequence is TDTSSASTGHATSLPVTDTSSASTGH. Polar residues-rich tracts occupy residues 2980–2989 and 3009–3037; these read TDTSSASTGH and LPVT…STGH. 4 O-linked (GalNAc...) threonine glycosylation sites follow: Thr-3023, Thr-3028, Thr-3035, and Thr-3039. Positions 3044–3069 are enriched in polar residues; sequence TDTSSASTGHANPLHVTSPSSASTGH. O-linked (GalNAc...) threonine glycosylation is found at Thr-3071, Thr-3076, Thr-3078, Thr-3083, Thr-3087, Thr-3092, Thr-3099, Thr-3102, Thr-3103, Thr-3108, Thr-3115, Thr-3118, Thr-3119, Thr-3124, Thr-3126, Thr-3131, Thr-3135, Thr-3140, Thr-3142, Thr-3147, Thr-3150, Thr-3151, Thr-3156, Thr-3158, Thr-3163, Thr-3167, Thr-3172, Thr-3179, Thr-3182, Thr-3183, Thr-3188, Thr-3220, Thr-3227, Thr-3230, Thr-3231, Thr-3236, Thr-3243, Thr-3247, Thr-3252, and Thr-3254. The span at 3076–3118 shows a compositional bias: polar residues; sequence TDTSSASTGHATPLPVTSLSSVSTGDTTPLPVTSPSSASTGHT. A compositionally biased stretch (polar residues) spans 3124 to 3134; sequence TDTSSASTGQA. Over residues 3140-3151 the composition is skewed to low complexity; that stretch reads TSTSSASTGDTT. 2 stretches are compositionally biased toward polar residues: residues 3156 to 3197 and 3205 to 3251; these read TDTS…STGH and DASS…SLPV. The span at 3252-3264 shows a compositional bias: low complexity; that stretch reads TDTSSASTGDTTS. The span at 3265 to 3283 shows a compositional bias: polar residues; sequence LPVTDTSSAYTGDTTSLPV. Positions 3284–3295 are enriched in low complexity; it reads TDTSSSSTGDTT. Thr-3294, Thr-3332, Thr-3339, Thr-3342, Thr-3343, Thr-3348, Thr-3350, Thr-3355, and Thr-3359 each carry an O-linked (GalNAc...) threonine glycan. Residues 3320-3337 are compositionally biased toward polar residues; it reads SASTGHATPLHVTSPSSA. The span at 3338–3356 shows a compositional bias: low complexity; that stretch reads STGDTTPVPVTDTSSVSTG. Polar residues-rich tracts occupy residues 3365-3374 and 3381-3405; these read GLSSASTGDT and DISS…STGD. The N-linked (GlcNAc...) asparagine glycan is linked to Asn-3397. 11 O-linked (GalNAc...) threonine glycosylation sites follow: Thr-3398, Thr-3403, Thr-3406, Thr-3412, Thr-3419, Thr-3423, Thr-3428, Thr-3430, Thr-3435, Thr-3439, and Thr-3444. The span at 3412 to 3421 shows a compositional bias: polar residues; it reads TSPSSASTGH. Over residues 3428-3471 the composition is skewed to low complexity; the sequence is TSTSSASTGHATPVPVTSTSSASTGHTTPLPVTDTSSASTGDTT. Ser-3445 carries O-linked (GalNAc...) serine glycosylation. Residues Thr-3446, Thr-3451, Thr-3454, Thr-3455, Thr-3460, Thr-3462, Thr-3467, Thr-3470, Thr-3471, Thr-3476, Thr-3483, Thr-3486, Thr-3487, Thr-3492, Thr-3499, Thr-3502, Thr-3504, Thr-3508, Thr-3515, Thr-3519, Thr-3524, Thr-3526, Thr-3531, Thr-3535, Thr-3540, Thr-3547, Thr-3550, Thr-3551, Thr-3556, Thr-3567, Thr-3614, Thr-3615, Thr-3622, Thr-3678, Thr-3679, Thr-3686, Thr-3691, Thr-3695, Thr-3700, Thr-3710, Thr-3711, Thr-3716, Thr-3718, Thr-3723, Thr-3727, Thr-3732, Thr-3739, Thr-3743, Thr-3748, Thr-3780, Thr-3787, Thr-3790, Thr-3791, Thr-3796, Thr-3798, Thr-3803, Thr-3807, Thr-3812, Thr-3822, Thr-3823, Thr-3828, Thr-3835, Thr-3839, Thr-3844, Thr-3851, Thr-3854, Thr-3860, Thr-3867, Thr-3871, Thr-3876, Thr-3883, Thr-3886, Thr-3887, Thr-3892, Thr-3894, Thr-3899, Thr-3903, Thr-3935, Thr-3940, Thr-3942, Thr-3947, Thr-3950, Thr-3951, Thr-3956, Thr-3958, Thr-3963, Thr-3967, Thr-3972, Thr-3979, Thr-3983, Thr-3988, Thr-3990, Thr-3995, Thr-3999, Thr-4004, Thr-4006, Thr-4011, Thr-4015, and Thr-4020 are each glycosylated (O-linked (GalNAc...) threonine). Residues 3473–3486 show a composition bias toward polar residues; sequence LPVTSPSSASTGHT. Residues 3493 to 3517 are compositionally biased toward polar residues; that stretch reads IPSSASTGDTSTLPVTGASSASTGH. Residues 3524-3550 are compositionally biased toward polar residues; it reads TDTSSVSTGHATPLPVTSLSSVSTGDT. Positions 3557-3580 are enriched in polar residues; it reads DASSASTGQATPLPVTSLSSVSTG. A compositionally biased stretch (low complexity) spans 3604–3615; that stretch reads TDTSSASTGDTT. The span at 3620–3644 shows a compositional bias: polar residues; it reads TDTSSASTGQATPLPVTSLSSVSTG. Over residues 3668 to 3679 the composition is skewed to low complexity; it reads TDTSSASTGDTT. A compositionally biased stretch (polar residues) spans 3684–3694; the sequence is TDTSSASTGQA. Over residues 3710–3728 the composition is skewed to low complexity; that stretch reads TTPLPVTSTSSVSTGHVTP. The segment covering 3730 to 3741 has biased composition (polar residues); it reads HVTSPSSASTGH. The segment covering 3780 to 3791 has biased composition (low complexity); it reads TDASSASTGDTT. Residues 3796–3822 show a composition bias toward polar residues; sequence TDTSSASTGQATPLPVTSLSSVSTGDT. Residues 3860–3869 show a composition bias toward polar residues; it reads TSPSSASTGH. A compositionally biased stretch (polar residues) spans 3877–3886; it reads GLSSASTGDT. Residues 3892-3901 show a composition bias toward polar residues; sequence TDTSSASTRH. The segment covering 3940–3951 has biased composition (low complexity); the sequence is TSTSSASTGDTT. The span at 3956–3981 shows a compositional bias: polar residues; it reads TDTSSVSTGHATSLPVTSRSSASTGH. Over residues 3988–3997 the composition is skewed to polar residues; that stretch reads TDTSSVSTGH. The span at 3999 to 4011 shows a compositional bias: low complexity; sequence TPLPVTSTSSVST. Polar residues predominate over residues 4018–4029; sequence PVTSPSSASTGH. 4 O-linked (GalNAc...) serine glycosylation sites follow: Ser-4021, Ser-4023, Ser-4024, and Ser-4026. Thr-4027, Thr-4031, and Thr-4036 each carry an O-linked (GalNAc...) threonine glycan. Residues 4030 to 4047 show a composition bias toward low complexity; that stretch reads ATPVPVTSTSSASTGDTT. An O-linked (GalNAc...) serine glycan is attached at Ser-4037. Thr-4038, Thr-4043, Thr-4046, and Thr-4047 each carry an O-linked (GalNAc...) threonine glycan. A compositionally biased stretch (polar residues) spans 4049 to 4093; that stretch reads LPVTNASSLSTGHATPLHVTSPSSASRGDTSTLPVTDASSASTGH. An N-linked (GlcNAc...) asparagine glycan is attached at Asn-4053. Residues Thr-4078 and Thr-4084 are each glycosylated (O-linked (GalNAc...) threonine). Over residues 4095 to 4107 the composition is skewed to low complexity; it reads TPLPLTSLSSVST. 30 O-linked (GalNAc...) threonine glycosylation sites follow: Thr-4110, Thr-4111, Thr-4116, Thr-4118, Thr-4123, Thr-4127, Thr-4132, Thr-4139, Thr-4142, Thr-4143, Thr-4148, Thr-4158, Thr-4159, Thr-4164, Thr-4171, Thr-4175, Thr-4180, Thr-4182, Thr-4187, Thr-4190, Thr-4191, Thr-4196, Thr-4198, Thr-4203, Thr-4207, Thr-4212, Thr-4214, Thr-4219, Thr-4223, and Thr-4239. The span at 4116–4142 shows a compositional bias: polar residues; that stretch reads TDTSSASTGQATPLPVTSLSSVSTGDT. Residues 4149 to 4173 show a composition bias toward polar residues; sequence IPSSASSGHTTSLPVTDASSVSTGH. Low complexity predominate over residues 4180-4191; that stretch reads TSTSSASTGDTT. A compositionally biased stretch (polar residues) spans 4196-4205; the sequence is TDTSSASTGH. Positions 4212 to 4223 are enriched in polar residues; that stretch reads TDTSSASTGHAT. Low complexity predominate over residues 4242–4254; sequence AVSSATSASTVSS. The disordered stretch occupies residues 4242–4288; it reads AVSSATSASTVSSDSPLKMETPGMTTPSLKTDGGRRTATSPPPTTSQ. Residues Thr-4272, Thr-4278, Thr-4280, Thr-4289, Thr-4293, and Thr-4297 are each glycosylated (O-linked (GalNAc...) threonine). Residues 4397–4552 form the NIDO domain; that stretch reads PFWDDADFST…GLQFYRLHRE (156 aa). The region spanning 4553–4668 is the AMOP domain; the sequence is ERPNYRLECL…YLCALYQQRR (116 aa). Residues 4680 to 4880 form the VWFD domain; sequence QPAWMFGDPH…TWQINGTGLL (201 aa). Residues Asn-4715, Asn-4768, Asn-4787, Asn-4796, Asn-4831, Asn-4852, Asn-4875, Asn-4902, Asn-4928, Asn-4946, Asn-4982, Asn-4997, Asn-5045, Asn-5052, Asn-5100, and Asn-5119 are each glycosylated (N-linked (GlcNAc...) asparagine). Residues 5118 to 5157 enclose the EGF-like 1 domain; sequence QNQSCPVNYCYNQGHCYISQTLGCQPMCTCPPAFTDSRCF. 3 disulfide bridges follow: Cys-5122–Cys-5133, Cys-5127–Cys-5145, and Cys-5147–Cys-5156. Residues Asn-5185, Asn-5192, and Asn-5292 are each glycosylated (N-linked (GlcNAc...) asparagine). The 40-residue stretch at 5321-5360 folds into the EGF-like 2 domain; sequence VSPCSRGYCDHGGQCQHLPSGPRCSCVSFSIYTAWGEHCE. 3 cysteine pairs are disulfide-bonded: Cys-5324/Cys-5335, Cys-5329/Cys-5344, and Cys-5346/Cys-5359. A helical transmembrane segment spans residues 5369-5389; sequence FFGIFFGALGGLLLLGVGTFV.

In terms of assembly, a heterodimeric complex, composed of a mucin-4 alpha chain and a cysteine-rich transmembrane mucin-4 beta chain. Mucin-4 beta chain interacts with ERBB2 via the EGF-like domain 1. In nonpolarized cells, associates with ERBB2 and ERBB3. Proteolytically cleaved into 2 chains, mucin-4 alpha chain and mucin-4 beta chain. Post-translationally, highly O-glycosylated. In terms of processing, is predominantly N-glycosylated. As to expression, expressed in the thymus, thyroid, lung, trachea, esophagus, stomach, small intestine, colon, testis, prostate, ovary, uterus, placenta, and mammary and salivary glands. Expressed in carcinomas arising from some of these epithelia, such as lung cancers, squamous cell carcinomas of the upper aerodigestive tract, mammary carcinomas, biliary tract, colon, and cervix cancers. Minimally or not expressed in the normal pancreas or chronic pancreatitis, but is highly expressed in pancreatic tumors and pancreatic tumor cell lines.

The protein resides in the cell membrane. It is found in the secreted. Functionally, membrane-bound mucin, a family of highly glycosylated proteins that constitute the major component of the mucus, the slimy and viscous secretion covering epithelial surfaces. These glycoproteins play important roles in the protection of the epithelium and are implicated in epithelial renewal and differentiation. Regulates cellular behavior through both anti-adhesive effects on cell-cell and cell-extracellular matrix interactions and its ability to act as an intramembrane ligand for ERBB2. Plays an important role in proliferation and differentiation of epithelial cells by inducing specific phosphorylation of ERBB2. In polarized epithelial cells, segregates ERBB2 and other ERBB receptors and prevents ERBB2 from acting as a coreceptor. The interaction with ERBB2 leads to enhanced expression of CDKN1B. The formation of a MUC4-ERBB2-ERBB3-NRG1 complex leads to down-regulation of CDKN1B, resulting in repression of apoptosis and stimulation of proliferation. Its ability to promote tumor growth may be mainly due to repression of apoptosis as opposed to proliferation. The polypeptide is Mucin-4 (MUC4) (Homo sapiens (Human)).